The following is a 207-amino-acid chain: 2,3-bisphosphoglycerate-dependent phosphoglycerate mutase (207 aa).

Substrate contacts are provided by residues 10–17 (RHGQSEWN), 23–24 (TG), arginine 62, 89–92 (ERDY), lysine 100, 116–117 (RR), and 160–161 (GN). Histidine 11 functions as the Tele-phosphohistidine intermediate in the catalytic mechanism. The Proton donor/acceptor role is filled by glutamate 89.

Belongs to the phosphoglycerate mutase family. BPG-dependent PGAM subfamily. As to quaternary structure, homodimer.

The catalysed reaction is (2R)-2-phosphoglycerate = (2R)-3-phosphoglycerate. Its pathway is carbohydrate degradation; glycolysis; pyruvate from D-glyceraldehyde 3-phosphate: step 3/5. Its function is as follows. Catalyzes the interconversion of 2-phosphoglycerate and 3-phosphoglycerate. The polypeptide is 2,3-bisphosphoglycerate-dependent phosphoglycerate mutase (Nitrobacter hamburgensis (strain DSM 10229 / NCIMB 13809 / X14)).